We begin with the raw amino-acid sequence, 404 residues long: Pleckstrin homology domain-containing family A member 1 (404 aa).

PH domains lie at 7-112 (QNRI…KAIK) and 191-289 (AVIK…GAIV). Disordered regions lie at residues 291–332 (QRGP…RSNS) and 355–404 (NFKV…VSDV). Positions 316–332 (TNAATATSHSTASRSNS) are enriched in low complexity. Ser-332 and Ser-362 each carry phosphoserine.

In terms of assembly, interacts with MPDZ and PTPN13. Highly expressed in skeletal muscle, thymus, pancreas, placenta and lung. Detected at low levels in brain, heart, peripheral blood leukocytes, testis, ovary, spinal cord, thyroid, kidney, liver, small intestine and colon.

It is found in the cytoplasm. Its subcellular location is the cell membrane. It localises to the nucleus. Binds specifically to phosphatidylinositol 3,4-diphosphate (PtdIns3,4P2), but not to other phosphoinositides. May recruit other proteins to the plasma membrane. In Homo sapiens (Human), this protein is Pleckstrin homology domain-containing family A member 1 (PLEKHA1).